The following is an 884-amino-acid chain: Alanine--tRNA ligase (884 aa).

Residues His-565, His-569, Cys-675, and His-679 each coordinate Zn(2+).

It belongs to the class-II aminoacyl-tRNA synthetase family. Requires Zn(2+) as cofactor.

The protein resides in the cytoplasm. It carries out the reaction tRNA(Ala) + L-alanine + ATP = L-alanyl-tRNA(Ala) + AMP + diphosphate. Functionally, catalyzes the attachment of alanine to tRNA(Ala) in a two-step reaction: alanine is first activated by ATP to form Ala-AMP and then transferred to the acceptor end of tRNA(Ala). Also edits incorrectly charged Ser-tRNA(Ala) and Gly-tRNA(Ala) via its editing domain. The sequence is that of Alanine--tRNA ligase from Maricaulis maris (strain MCS10) (Caulobacter maris).